The sequence spans 393 residues: MVAGTRCLLVLLLPQVLLGGAAGLIPELGRKKFAGASRPLSRPSEDVLSEFELRLLSMFGLKQRPTPSKDVVVPPYMLDLYRRHSGQPGALAPDHRLERAASRANTVLSFHHEEAIEELSEMSGKTSRRFFFNLSSVPTDEFLTSAELQIFREQMQEALGNSSFQHRINIYEIIKPATASSKFPVTRLLDTRLVTQNTSQWESFDVTPAVMRWTAQGHTNHGFVVEVAHLEEKPGVSKRHVRISRSLHQDEHSWSQVRPLLVTFGHDGKGHPLHKREKRQAKHKQRKRLKSSCKRHPLYVDFSDVGWNDWIVAPPGYHAFYCHGECPFPLADHLNSTNHAIVQTLVNSVNSKIPKACCVPTELSAISMLYLDENEKVVLKNYQDMVVEGCGCR.

The signal sequence occupies residues 1-19; it reads MVAGTRCLLVLLLPQVLLG. Positions 20–279 are cleaved as a propeptide — cleaved by PCSK5; sequence GAAGLIPELG…GHPLHKREKR (260 aa). Ser-85 is subject to Phosphoserine. N-linked (GlcNAc...) asparagine glycosylation is found at Asn-133, Asn-161, and Asn-197. Residues 268–290 are disordered; the sequence is GKGHPLHKREKRQAKHKQRKRLK. Basic residues predominate over residues 271–290; that stretch reads HPLHKREKRQAKHKQRKRLK. Cystine bridges form between Cys-293/Cys-358, Cys-322/Cys-390, and Cys-326/Cys-392. Asn-335 carries N-linked (GlcNAc...) asparagine glycosylation.

It belongs to the TGF-beta family. In terms of assembly, homodimer; disulfide-linked. Interacts with SOSTDC1. Interacts with GREM2, RGMA, RGMB and RGMC. Interacts with ASPN. Interacts with MAFP5. Interacts with FBN1 (via N-terminal domain) and FBN2. Interacts with type I receptor BMPR1A. Interacts with type II receptor BMPR2. Interacts with SCUBE3. Interacts with TNFAIP6 (primarily via Link domain); this interaction is inhibited by hyaluronan. Interacts with ERFE. Interacts with BMPR1A/ALK3; the interaction may induce HAMP expression. Forms heterodimers with BMP6 in vitro; the heterodimer then binds to its receptor BMPR1A /ALK3 and may induce HAMP expression. Interacts with TGFBR3. In terms of tissue distribution, expressed in femur, calvaria, trachea, lung and ovary.

It is found in the secreted. Functionally, growth factor of the TGF-beta superfamily that plays essential roles in many developmental processes, including cardiogenesis, neurogenesis, and osteogenesis. Induces cartilage and bone formation. Initiates the canonical BMP signaling cascade by associating with type I receptor BMPR1A and type II receptor BMPR2. Once all three components are bound together in a complex at the cell surface, BMPR2 phosphorylates and activates BMPR1A. In turn, BMPR1A propagates signal by phosphorylating SMAD1/5/8 that travel to the nucleus and act as activators and repressors of transcription of target genes. Also acts to promote expression of HAMP, via the interaction with its receptor BMPR1A/ALK3. Can also signal through non-canonical pathways such as ERK/MAP kinase signaling cascade that regulates osteoblast differentiation. Also stimulates the differentiation of myoblasts into osteoblasts via the EIF2AK3-EIF2A-ATF4 pathway by stimulating EIF2A phosphorylation which leads to increased expression of ATF4 which plays a central role in osteoblast differentiation. Acts as a positive regulator of odontoblast differentiation during mesenchymal tooth germ formation, expression is repressed during the bell stage by MSX1-mediated inhibition of CTNNB1 signaling. The chain is Bone morphogenetic protein 2 (Bmp2) from Rattus norvegicus (Rat).